The chain runs to 150 residues: Nascent polypeptide-associated complex subunit beta (150 aa).

Disordered regions lie at residues 1–45 and 123–150; these read MADV…LQQS and YQNM…NKVE. A compositionally biased stretch (basic residues) spans 23–32; that stretch reads TPRRKVKRAP. The 66-residue stretch at 36-101 folds into the NAC-A/B domain; that stretch reads GADDKKLQQS…GEDKELTELV (66 aa).

It belongs to the NAC-beta family. Part of the nascent polypeptide-associated complex (NAC), consisting of EGD2 and EGD1. NAC associates with ribosomes via EGD1.

The protein localises to the cytoplasm. It is found in the nucleus. Component of the nascent polypeptide-associated complex (NAC), a dynamic component of the ribosomal exit tunnel, protecting the emerging polypeptides from interaction with other cytoplasmic proteins to ensure appropriate nascent protein targeting. The NAC complex also promotes mitochondrial protein import by enhancing productive ribosome interactions with the outer mitochondrial membrane and blocks the inappropriate interaction of ribosomes translating non-secretory nascent polypeptides with translocation sites in the membrane of the endoplasmic reticulum. EGD1 may act as a transcription factor that exert a negative effect on the expression of several genes that are transcribed by RNA polymerase II. This Chaetomium globosum (strain ATCC 6205 / CBS 148.51 / DSM 1962 / NBRC 6347 / NRRL 1970) (Soil fungus) protein is Nascent polypeptide-associated complex subunit beta (EGD1).